The sequence spans 253 residues: uncharacterized protein (253 aa).

This is an uncharacterized protein from Bacillus subtilis (strain 168).